The primary structure comprises 120 residues: NAD(P)H-quinone oxidoreductase subunit 3, chloroplastic (120 aa).

Transmembrane regions (helical) follow at residues 9–29 (IFWA…FVSG), 64–84 (MFAL…PWAM), and 88–108 (VLGI…IVGL).

It belongs to the complex I subunit 3 family. In terms of assembly, NDH is composed of at least 16 different subunits, 5 of which are encoded in the nucleus.

Its subcellular location is the plastid. The protein resides in the chloroplast thylakoid membrane. It catalyses the reaction a plastoquinone + NADH + (n+1) H(+)(in) = a plastoquinol + NAD(+) + n H(+)(out). The enzyme catalyses a plastoquinone + NADPH + (n+1) H(+)(in) = a plastoquinol + NADP(+) + n H(+)(out). Its function is as follows. NDH shuttles electrons from NAD(P)H:plastoquinone, via FMN and iron-sulfur (Fe-S) centers, to quinones in the photosynthetic chain and possibly in a chloroplast respiratory chain. The immediate electron acceptor for the enzyme in this species is believed to be plastoquinone. Couples the redox reaction to proton translocation, and thus conserves the redox energy in a proton gradient. This chain is NAD(P)H-quinone oxidoreductase subunit 3, chloroplastic, found in Daucus carota (Wild carrot).